A 134-amino-acid polypeptide reads, in one-letter code: Profilin-3 (134 aa).

Residues Cys-13 and Cys-118 are joined by a disulfide bond. The short motif at 84–100 (AVIRGKKGSGGITIKKT) is the Involved in PIP2 interaction element. The residue at position 114 (Thr-114) is a Phosphothreonine.

The protein belongs to the profilin family. Occurs in many kinds of cells as a complex with monomeric actin in a 1:1 ratio. Post-translationally, phosphorylated by MAP kinases.

The protein localises to the cytoplasm. It is found in the cytoskeleton. Functionally, binds to actin and affects the structure of the cytoskeleton. At high concentrations, profilin prevents the polymerization of actin, whereas it enhances it at low concentrations. The chain is Profilin-3 from Olea europaea (Common olive).